The sequence spans 185 residues: Peptidyl-tRNA hydrolase (185 aa).

Residue Tyr-14 participates in tRNA binding. His-19 functions as the Proton acceptor in the catalytic mechanism. The tRNA site is built by Tyr-65, Asn-67, and Asn-113.

It belongs to the PTH family. As to quaternary structure, monomer.

The protein resides in the cytoplasm. It catalyses the reaction an N-acyl-L-alpha-aminoacyl-tRNA + H2O = an N-acyl-L-amino acid + a tRNA + H(+). In terms of biological role, hydrolyzes ribosome-free peptidyl-tRNAs (with 1 or more amino acids incorporated), which drop off the ribosome during protein synthesis, or as a result of ribosome stalling. Its function is as follows. Catalyzes the release of premature peptidyl moieties from peptidyl-tRNA molecules trapped in stalled 50S ribosomal subunits, and thus maintains levels of free tRNAs and 50S ribosomes. This is Peptidyl-tRNA hydrolase from Rickettsia bellii (strain RML369-C).